A 581-amino-acid polypeptide reads, in one-letter code: Protein GAMETOPHYTE DEFECTIVE 1 (581 aa).

The span at 452 to 467 (SMNIESTSEGGSMSPS) shows a compositional bias: polar residues. The segment at 452 to 512 (SMNIESTSEG…TTGHASNDEM (61 aa)) is disordered. Residues 496-512 (ENSKERATTGHASNDEM) are compositionally biased toward basic and acidic residues.

It belongs to the eukaryotic/archaeal RNase P protein component 3 family. In terms of assembly, probable component of nuclear RNase P and RNase MRP ribonucleoproteins. Interacts with POP5. In terms of tissue distribution, mostly expressed in inflorescence and roots, to a lower extent in leaves, and, at low levels, in siliques, seedlings and stems.

Its subcellular location is the nucleus. The protein localises to the nucleolus. The protein resides in the mitochondrion. In terms of biological role, probable component of ribonuclease P, a ribonucleoprotein complex that generates mature tRNA molecules by cleaving their 5'-ends. May also be a component of the MRP ribonuclease complex, which cleaves pre-rRNA sequences. Required for female gametophyte development and male competence. The polypeptide is Protein GAMETOPHYTE DEFECTIVE 1 (Arabidopsis thaliana (Mouse-ear cress)).